Consider the following 554-residue polypeptide: Inactive sesquithujene synthase B (554 aa).

Mg(2+)-binding residues include Asp308 and Asp312. Substrate is bound by residues Asp308, Asp312, Arg449, and Asn452. A DDXXD motif motif is present at residues 308 to 312 (DDMFD). Mg(2+) contacts are provided by Asn452, Ser456, and Glu460.

Belongs to the terpene synthase family. In terms of assembly, monomer. It depends on Mg(2+) as a cofactor. Mn(2+) serves as cofactor.

The protein localises to the cytoplasm. The protein operates within secondary metabolite biosynthesis; terpenoid biosynthesis. Functionally, non-functional sesquiterpene synthase having less than 1% of the activity found in TPS5A. The polypeptide is Inactive sesquithujene synthase B (Zea mays (Maize)).